The following is a 355-amino-acid chain: 3-dehydroquinate synthase (355 aa).

NAD(+)-binding positions include 69–74, 103–107, 127–128, lysine 140, lysine 149, and 167–170; these read DGEQHK, GVIGD, TT, and TLQT. Glutamate 182, histidine 245, and histidine 262 together coordinate Zn(2+).

It belongs to the sugar phosphate cyclases superfamily. Dehydroquinate synthase family. Requires Co(2+) as cofactor. The cofactor is Zn(2+). It depends on NAD(+) as a cofactor.

The protein resides in the cytoplasm. The catalysed reaction is 7-phospho-2-dehydro-3-deoxy-D-arabino-heptonate = 3-dehydroquinate + phosphate. It participates in metabolic intermediate biosynthesis; chorismate biosynthesis; chorismate from D-erythrose 4-phosphate and phosphoenolpyruvate: step 2/7. Functionally, catalyzes the conversion of 3-deoxy-D-arabino-heptulosonate 7-phosphate (DAHP) to dehydroquinate (DHQ). The chain is 3-dehydroquinate synthase from Pseudoalteromonas atlantica (strain T6c / ATCC BAA-1087).